The primary structure comprises 178 residues: MENTQENPTDQTTEETGREAQAAENAAPAAEAALAEAQAKIAELQESFLRAKAETENVRRRAQDDVAKAHKFAIESFAENLLPVLDSLEAAVGDTSGDLAKVREGVELTLRQLTSALEKGRVAALNPVGEKFDPHLHQAISMVPADQEPNTVVAVLQKGYTIADRVLRPALVTVAQPK.

Residues 1–11 show a composition bias toward polar residues; that stretch reads MENTQENPTDQ. A disordered region spans residues 1-31; it reads MENTQENPTDQTTEETGREAQAAENAAPAAE. The segment covering 19–31 has biased composition (low complexity); sequence EAQAAENAAPAAE.

This sequence belongs to the GrpE family. As to quaternary structure, homodimer.

The protein localises to the cytoplasm. Its function is as follows. Participates actively in the response to hyperosmotic and heat shock by preventing the aggregation of stress-denatured proteins, in association with DnaK and GrpE. It is the nucleotide exchange factor for DnaK and may function as a thermosensor. Unfolded proteins bind initially to DnaJ; upon interaction with the DnaJ-bound protein, DnaK hydrolyzes its bound ATP, resulting in the formation of a stable complex. GrpE releases ADP from DnaK; ATP binding to DnaK triggers the release of the substrate protein, thus completing the reaction cycle. Several rounds of ATP-dependent interactions between DnaJ, DnaK and GrpE are required for fully efficient folding. The protein is Protein GrpE of Burkholderia thailandensis (strain ATCC 700388 / DSM 13276 / CCUG 48851 / CIP 106301 / E264).